A 194-amino-acid chain; its full sequence is 13S globulin basic chain (194 aa).

The region spanning 13-162 is the Cupin type-1 domain; the sequence is ENIKSPQEAD…SFQISSEEAE (150 aa).

The protein belongs to the 11S seed storage protein (globulins) family. In terms of assembly, hexamer; each subunit is composed of an acidic and a basic chain derived from a single precursor and linked by a disulfide bond. In terms of tissue distribution, cotyledons and endosperm protein bodies.

Its function is as follows. Seed storage protein with a relatively high level of Lys and Met. The polypeptide is 13S globulin basic chain (Fagopyrum esculentum (Common buckwheat)).